Reading from the N-terminus, the 102-residue chain is Large ribosomal subunit protein uL23c (102 aa).

Belongs to the universal ribosomal protein uL23 family. In terms of assembly, part of the 50S ribosomal subunit.

Its subcellular location is the plastid. The protein localises to the chloroplast. Its function is as follows. Binds to 23S rRNA. In Phaeodactylum tricornutum (strain CCAP 1055/1), this protein is Large ribosomal subunit protein uL23c (rpl23).